The following is a 67-amino-acid chain: uncharacterized protein (67 aa).

The next 2 helical transmembrane spans lie at 10-30 (EFFI…IIMW) and 40-60 (LMVG…WMVF).

This sequence belongs to the plectrovirus ORF10 family.

It is found in the host membrane. This is an uncharacterized protein from Spiroplasma melliferum (SpV1).